Reading from the N-terminus, the 389-residue chain is Probable protein phosphatase 2C 12 (389 aa).

Positions V42–L356 constitute a PPM-type phosphatase domain. Positions 77 and 78 each coordinate Mn(2+). The disordered stretch occupies residues A119 to S145. Residues S121 to S145 are compositionally biased toward low complexity. Mn(2+)-binding residues include D301 and D347.

This sequence belongs to the PP2C family. It depends on Mg(2+) as a cofactor. Requires Mn(2+) as cofactor.

The catalysed reaction is O-phospho-L-seryl-[protein] + H2O = L-seryl-[protein] + phosphate. The enzyme catalyses O-phospho-L-threonyl-[protein] + H2O = L-threonyl-[protein] + phosphate. The polypeptide is Probable protein phosphatase 2C 12 (Oryza sativa subsp. japonica (Rice)).